A 556-amino-acid chain; its full sequence is 2-succinyl-5-enolpyruvyl-6-hydroxy-3-cyclohexene-1-carboxylate synthase (556 aa).

This sequence belongs to the TPP enzyme family. MenD subfamily. Homodimer. Mg(2+) is required as a cofactor. Mn(2+) serves as cofactor. Requires thiamine diphosphate as cofactor.

The catalysed reaction is isochorismate + 2-oxoglutarate + H(+) = 5-enolpyruvoyl-6-hydroxy-2-succinyl-cyclohex-3-ene-1-carboxylate + CO2. Its pathway is quinol/quinone metabolism; 1,4-dihydroxy-2-naphthoate biosynthesis; 1,4-dihydroxy-2-naphthoate from chorismate: step 2/7. It participates in quinol/quinone metabolism; menaquinone biosynthesis. In terms of biological role, catalyzes the thiamine diphosphate-dependent decarboxylation of 2-oxoglutarate and the subsequent addition of the resulting succinic semialdehyde-thiamine pyrophosphate anion to isochorismate to yield 2-succinyl-5-enolpyruvyl-6-hydroxy-3-cyclohexene-1-carboxylate (SEPHCHC). This is 2-succinyl-5-enolpyruvyl-6-hydroxy-3-cyclohexene-1-carboxylate synthase from Salmonella dublin (strain CT_02021853).